The primary structure comprises 414 residues: MGLKKFLEDIEHHFEPGGKHEKWFALYEAAATLFYTPGLVTKKSSHVRDSVDLKRIMIMVWFAVFPAMFWGMYNAGGQAIAALNHMYAGDQLAQIIAGNWHYWLTEMLGGTISADASWGSKMLLGATYFLPIYATVFLVGGFWEVLFCMVRKHEVNEGFFVTSILFALIVPPTLPLWQAALGITFGVVVAKEIFGGTGRNFLNPALAGRAFLFFAYPAQISGDVVWTAADGFSGATALSQWAQGGNSALVNTVTGAPITWLDAFIGNIPGSIGEVSTLALLIGAAMIVYMRIASWRIIAGVMIGMIVVSTLFNVIGSDTNAMFSMPWHWHLVLGGFAFGMFFMATDPVSASFTNKGKWWYGILIGAMCVMIRVVNPAYPEGMMLAILFANLFAPLFDHLVVEKNIKRRQARYGK.

Transmembrane regions (helical) follow at residues tryptophan 23 to valine 40, isoleucine 56 to glycine 76, phenylalanine 129 to methionine 149, and isoleucine 164 to threonine 184. At threonine 236 the chain carries FMN phosphoryl threonine. Helical transmembrane passes span isoleucine 268–valine 288, isoleucine 297–serine 317, methionine 322–phenylalanine 342, tryptophan 358–tyrosine 378, and glycine 381–valine 401.

Belongs to the NqrB/RnfD family. As to quaternary structure, composed of six subunits; NqrA, NqrB, NqrC, NqrD, NqrE and NqrF. The cofactor is FMN.

Its subcellular location is the cell inner membrane. It catalyses the reaction a ubiquinone + n Na(+)(in) + NADH + H(+) = a ubiquinol + n Na(+)(out) + NAD(+). NQR complex catalyzes the reduction of ubiquinone-1 to ubiquinol by two successive reactions, coupled with the transport of Na(+) ions from the cytoplasm to the periplasm. NqrA to NqrE are probably involved in the second step, the conversion of ubisemiquinone to ubiquinol. In Vibrio vulnificus (strain CMCP6), this protein is Na(+)-translocating NADH-quinone reductase subunit B.